A 245-amino-acid chain; its full sequence is MDNGIRVKLVNYTKKPLETVTWAALISYWDEWETETFGRMSDKDVEMHLPRVLGYGHESILEHATLTFAIEGCSRVCSHQLVRHRLASYTQQSQRYIVLNPEDVEETFVIPSGIKEDPELLAEWKELMKKSIELYKKSVERGQHQEDARFILPQAVRTKIVVTMNLRELKHFLGLRACERAQWEIREVAWKMLEEIAKNDELRPIIKWAKLGPRCVQLGYCPEGELMPPGCWKRTGEKWKTLFEG.

The 206-residue stretch at 5 to 210 (IRVKLVNYTK…ELRPIIKWAK (206 aa)) folds into the ThyX domain. Residues Ser-59, 83–85 (RHR), and Gln-91 each bind FAD. DUMP contacts are provided by residues 80–83 (QLVR), 91–95 (QQSQR), and Arg-149. The ThyX motif signature appears at 83–93 (RHRLASYTQQS). Residues 165-167 (NLR) and His-171 contribute to the FAD site. Position 176 (Arg-176) interacts with dUMP. Arg-176 functions as the Involved in ionization of N3 of dUMP, leading to its activation in the catalytic mechanism.

It belongs to the thymidylate synthase ThyX family. Homotetramer. It depends on FAD as a cofactor.

It catalyses the reaction dUMP + (6R)-5,10-methylene-5,6,7,8-tetrahydrofolate + NADPH + H(+) = dTMP + (6S)-5,6,7,8-tetrahydrofolate + NADP(+). It participates in pyrimidine metabolism; dTTP biosynthesis. Its function is as follows. Catalyzes the reductive methylation of 2'-deoxyuridine-5'-monophosphate (dUMP) to 2'-deoxythymidine-5'-monophosphate (dTMP) while utilizing 5,10-methylenetetrahydrofolate (mTHF) as the methyl donor, and NADPH and FADH(2) as the reductant. The polypeptide is Flavin-dependent thymidylate synthase (Thermococcus kodakarensis (strain ATCC BAA-918 / JCM 12380 / KOD1) (Pyrococcus kodakaraensis (strain KOD1))).